Consider the following 478-residue polypeptide: Cytochrome c-552 (478 aa).

The first 26 residues, 1–26, serve as a signal peptide directing secretion; that stretch reads MARTILRARRFFSLILPFFFISSVYA. Residue histidine 94 participates in heme c binding. Heme-binding residues include cysteine 122, cysteine 125, and lysine 126. Positions 160, 163, 164, 209, 212, and 213 each coordinate heme c. Ca(2+) contacts are provided by glutamate 215, tyrosine 216, lysine 261, and glutamine 263. Tyrosine 216 serves as a coordination point for substrate. Position 264 (histidine 264) interacts with substrate. Heme c-binding residues include histidine 275, cysteine 282, cysteine 285, histidine 286, histidine 301, cysteine 314, cysteine 317, histidine 318, and histidine 393.

This sequence belongs to the cytochrome c-552 family. Ca(2+) is required as a cofactor. Requires heme c as cofactor.

Its subcellular location is the periplasm. The enzyme catalyses 6 Fe(III)-[cytochrome c] + NH4(+) + 2 H2O = 6 Fe(II)-[cytochrome c] + nitrite + 8 H(+). It participates in nitrogen metabolism; nitrate reduction (assimilation). Catalyzes the reduction of nitrite to ammonia, consuming six electrons in the process. This is Cytochrome c-552 from Citrobacter koseri (strain ATCC BAA-895 / CDC 4225-83 / SGSC4696).